The following is a 270-amino-acid chain: UPF0354 protein BCG9842_B0431 (270 aa).

Belongs to the UPF0354 family.

This is UPF0354 protein BCG9842_B0431 from Bacillus cereus (strain G9842).